Here is an 849-residue protein sequence, read N- to C-terminus: G-type lectin S-receptor-like serine/threonine-protein kinase At4g11900 (849 aa).

The N-terminal stretch at 1 to 26 (MQICKKNVFLLYYGVLVFLSFQVSSS) is a signal peptide. One can recognise a Bulb-type lectin domain in the interval 27–180 (TDTISTNQPL…PNSSAAVLWQ (154 aa)). Residues 27–466 (TDTISTNQPL…RKTEHSKGKS (440 aa)) lie on the Extracellular side of the membrane. N111, N148, N172, and N232 each carry an N-linked (GlcNAc...) asparagine glycan. One can recognise an EGF-like domain in the interval 311 to 348 (PDNRCDVYNSCGSFGICNENREPPPCRCVPGFKREFSQ). 4 disulfides stabilise this stretch: C315/C327, C321/C336, C401/C421, and C405/C411. Residues 368 to 447 (CYKRNDEFLP…KGHTFFLRLA (80 aa)) form the PAN domain. A glycan (N-linked (GlcNAc...) asparagine) is linked at N450. The helical transmembrane segment at 467-487 (IVLPLVLASLVATAACFVGLY) threads the bilayer. The Cytoplasmic segment spans residues 488–849 (CCISSRIRRK…EATQTELEAR (362 aa)). A Protein kinase domain is found at 537-822 (FSRKKKLGEG…TLPIPKQPTF (286 aa)). Residues 543–551 (LGEGGFGPV) and K565 contribute to the ATP site. Residue S571 is modified to Phosphoserine. Positions 626–643 (LKSRELDWETRMKIVNGT) are caM-binding. D662 (proton acceptor) is an active-site residue. 2 positions are modified to phosphoserine: S666 and S679. T696 bears the Phosphothreonine mark. Residue S837 is modified to Phosphoserine. The residue at position 844 (T844) is a Phosphothreonine.

It belongs to the protein kinase superfamily. Ser/Thr protein kinase family.

Its subcellular location is the cell membrane. The enzyme catalyses L-seryl-[protein] + ATP = O-phospho-L-seryl-[protein] + ADP + H(+). It carries out the reaction L-threonyl-[protein] + ATP = O-phospho-L-threonyl-[protein] + ADP + H(+). The sequence is that of G-type lectin S-receptor-like serine/threonine-protein kinase At4g11900 from Arabidopsis thaliana (Mouse-ear cress).